The primary structure comprises 530 residues: Chaperone Ric-8A (530 aa).

Ser435 is modified (phosphoserine). Residues Thr440 and Thr442 each carry the phosphothreonine modification. 4 positions are modified to phosphoserine: Ser501, Ser522, Ser523, and Ser527.

Belongs to the synembryn family. Interacts with GDP-bound G alpha proteins GNAI1, GNAO1 and GNAQ, and with GNA13 with lower affinity. Does not interact with G-alpha proteins when they are in complex with subunits beta and gamma. Interacts (via C-terminus) with RGS14; the interaction stimulates the dissociation of the complex between RGS14 and the active GTP-bound form of GNAI1. Interacts with NCS1; interaction is favored in the absence of Ca(2+) and myristoylation of NCS1 is not required. As to expression, expressed in neurons and neurites of the CA1 and CA2 subregions of the hippocampus (at protein level). In adult brain, it is expressed in the neocortex, hippocampus and cerebellum as well as in the pineal gland and ependymal layer.

The protein resides in the cytoplasm. Its subcellular location is the cell cortex. Its function is as follows. Chaperone that specifically binds and folds nascent G alpha proteins prior to G protein heterotrimer formation, promoting their stability and activity: folds GNAI1, GNAO1, GNA13 and GNAQ. Does not fold G(s) G-alpha proteins GNAS nor GNAL. Also acts as a guanine nucleotide exchange factor (GEF) for G alpha proteins by stimulating exchange of bound GDP for free GTP. Involved in regulation of microtubule pulling forces during mitotic movement of chromosomes by stimulating G(i)-alpha protein (GNAI1), possibly leading to release G(i)-alpha-GTP and NuMA proteins from the NuMA-GPSM2-G(i)-alpha-GDP complex. Also acts as an activator for G(q)-alpha (GNAQ) protein by enhancing the G(q)-coupled receptor-mediated ERK activation. This chain is Chaperone Ric-8A, found in Mus musculus (Mouse).